The sequence spans 268 residues: Tryptophan synthase alpha chain (268 aa).

Catalysis depends on proton acceptor residues Glu49 and Asp60.

Belongs to the TrpA family. Tetramer of two alpha and two beta chains.

The catalysed reaction is (1S,2R)-1-C-(indol-3-yl)glycerol 3-phosphate + L-serine = D-glyceraldehyde 3-phosphate + L-tryptophan + H2O. It participates in amino-acid biosynthesis; L-tryptophan biosynthesis; L-tryptophan from chorismate: step 5/5. Functionally, the alpha subunit is responsible for the aldol cleavage of indoleglycerol phosphate to indole and glyceraldehyde 3-phosphate. The polypeptide is Tryptophan synthase alpha chain (Escherichia coli (strain ATCC 8739 / DSM 1576 / NBRC 3972 / NCIMB 8545 / WDCM 00012 / Crooks)).